Consider the following 339-residue polypeptide: Arylacetonitrilase (339 aa).

The region spanning 5-290 is the CN hydrolase domain; the sequence is IRVAVTQAEP…EGIVYADLDL (286 aa). Glutamate 45 functions as the Proton acceptor in the catalytic mechanism. Lysine 126 is a catalytic residue. Cysteine 167 functions as the Nucleophile in the catalytic mechanism.

The protein belongs to the carbon-nitrogen hydrolase superfamily. Nitrilase family.

The enzyme catalyses a nitrile + 2 H2O = a carboxylate + NH4(+). The catalysed reaction is 4-chlorophenylacetonitrile + 2 H2O = 4-chlorophenylacetate + NH4(+). Its function is as follows. Nitrilase that hydrolyzes preferentially phenylacetonitrile, (R,S)-mandelonitrile, and 3-indolylacetonitrile. This is Arylacetonitrilase from Fusarium vanettenii (strain ATCC MYA-4622 / CBS 123669 / FGSC 9596 / NRRL 45880 / 77-13-4) (Fusarium solani subsp. pisi).